The chain runs to 388 residues: Succinate--CoA ligase [ADP-forming] subunit beta (388 aa).

Residues 9 to 244 (KQLFAEFGLP…PSQEDKREAH (236 aa)) enclose the ATP-grasp domain. ATP-binding positions include K46, 53-55 (GRG), E99, S102, and E107. The Mg(2+) site is built by N199 and D213. Residues N264 and 321–323 (GIV) each bind substrate.

It belongs to the succinate/malate CoA ligase beta subunit family. Heterotetramer of two alpha and two beta subunits. The cofactor is Mg(2+).

It carries out the reaction succinate + ATP + CoA = succinyl-CoA + ADP + phosphate. The enzyme catalyses GTP + succinate + CoA = succinyl-CoA + GDP + phosphate. It functions in the pathway carbohydrate metabolism; tricarboxylic acid cycle; succinate from succinyl-CoA (ligase route): step 1/1. Functionally, succinyl-CoA synthetase functions in the citric acid cycle (TCA), coupling the hydrolysis of succinyl-CoA to the synthesis of either ATP or GTP and thus represents the only step of substrate-level phosphorylation in the TCA. The beta subunit provides nucleotide specificity of the enzyme and binds the substrate succinate, while the binding sites for coenzyme A and phosphate are found in the alpha subunit. This Vibrio vulnificus (strain YJ016) protein is Succinate--CoA ligase [ADP-forming] subunit beta.